Here is a 122-residue protein sequence, read N- to C-terminus: Large ribosomal subunit protein uL18 (122 aa).

This sequence belongs to the universal ribosomal protein uL18 family. Part of the 50S ribosomal subunit; part of the 5S rRNA/L5/L18/L25 subcomplex. Contacts the 5S and 23S rRNAs.

In terms of biological role, this is one of the proteins that bind and probably mediate the attachment of the 5S RNA into the large ribosomal subunit, where it forms part of the central protuberance. This is Large ribosomal subunit protein uL18 from Desulforapulum autotrophicum (strain ATCC 43914 / DSM 3382 / VKM B-1955 / HRM2) (Desulfobacterium autotrophicum).